The primary structure comprises 190 residues: Threonylcarbamoyl-AMP synthase (190 aa).

The YrdC-like domain occupies 7 to 190 (GDAIAAAIDV…ALTGELFRQG (184 aa)).

This sequence belongs to the SUA5 family. TsaC subfamily.

It is found in the cytoplasm. It carries out the reaction L-threonine + hydrogencarbonate + ATP = L-threonylcarbamoyladenylate + diphosphate + H2O. In terms of biological role, required for the formation of a threonylcarbamoyl group on adenosine at position 37 (t(6)A37) in tRNAs that read codons beginning with adenine. Catalyzes the conversion of L-threonine, HCO(3)(-)/CO(2) and ATP to give threonylcarbamoyl-AMP (TC-AMP) as the acyladenylate intermediate, with the release of diphosphate. This Shigella dysenteriae serotype 1 (strain Sd197) protein is Threonylcarbamoyl-AMP synthase.